Consider the following 286-residue polypeptide: L-rhamnose-binding lectin CSL1 (286 aa).

SUEL-type lectin domains lie at 96–186 (TTCE…YICL) and 193–280 (TCEG…YTCL).

In terms of biological role, L-rhamnose binding lectin. Has hemagglutinating activity towards rabbit erythrocytes, but not human type B erythrocytes. Hemagglutinating activity is inhibited by smooth-type lipopolysaccharide (LPS) from K.pneumoniae, E.coli K-235, S.flexneri 1A, A.salmonicida and S.minnesota and rough-type LPS from S.flexneri, but not by rough-type LPS from E.coli K12 and E.coli EH100. Agglutinates E.coli K12 and B.subtilis. The chain is L-rhamnose-binding lectin CSL1 from Oncorhynchus keta (Chum salmon).